The primary structure comprises 206 residues: Small ribosomal subunit protein uS4 (206 aa).

The S4 RNA-binding domain occupies 96 to 156 (GRLDNVVYRM…EKAKKQSRVK (61 aa)).

It belongs to the universal ribosomal protein uS4 family. As to quaternary structure, part of the 30S ribosomal subunit. Contacts protein S5. The interaction surface between S4 and S5 is involved in control of translational fidelity.

Functionally, one of the primary rRNA binding proteins, it binds directly to 16S rRNA where it nucleates assembly of the body of the 30S subunit. Its function is as follows. With S5 and S12 plays an important role in translational accuracy. The protein is Small ribosomal subunit protein uS4 of Salmonella agona (strain SL483).